The chain runs to 341 residues: Glyceraldehyde-3-phosphate dehydrogenase 2 (341 aa).

NAD(+) contacts are provided by residues 12–13 (RI), R78, and T120. D-glyceraldehyde 3-phosphate-binding positions include 152–154 (SCT) and T183. Residue C153 is the Nucleophile of the active site. Position 184 (N184) interacts with NAD(+). Residues R198, 211 to 212 (TG), and R234 each bind D-glyceraldehyde 3-phosphate. N313 provides a ligand contact to NAD(+).

The protein belongs to the glyceraldehyde-3-phosphate dehydrogenase family. In terms of assembly, homotetramer.

It localises to the cytoplasm. It carries out the reaction D-glyceraldehyde 3-phosphate + phosphate + NAD(+) = (2R)-3-phospho-glyceroyl phosphate + NADH + H(+). Its pathway is carbohydrate degradation; glycolysis; pyruvate from D-glyceraldehyde 3-phosphate: step 1/5. Functionally, catalyzes the oxidative phosphorylation of glyceraldehyde 3-phosphate (G3P) to 1,3-bisphosphoglycerate (BPG) using the cofactor NAD. The first reaction step involves the formation of a hemiacetal intermediate between G3P and a cysteine residue, and this hemiacetal intermediate is then oxidized to a thioester, with concomitant reduction of NAD to NADH. The reduced NADH is then exchanged with the second NAD, and the thioester is attacked by a nucleophilic inorganic phosphate to produce BPG. The polypeptide is Glyceraldehyde-3-phosphate dehydrogenase 2 (gapA2) (Staphylococcus epidermidis (strain ATCC 12228 / FDA PCI 1200)).